The primary structure comprises 359 residues: MRNRFGSLFSLTTWGESHGPCLGVVIDGCPAGLQLSPEDFVPAMSRRCPGRPGTSPRKEADTVHILSGIYQGKTTGTPIALQIFNTDVNSDPYREQDDRYRPGHGQFAYEKKYGIVDPLGGGRSSGRETACRVAAGVIAAKFLAHYDIHCLAFLSKLGQVSIEEYPKYSKEFAQSIYNSPFLSPLNHDAIFQIITDLQNTQDSLGGVVSFITSPIHESLGEPVFSKVQAMLASALMSIPAAKGFEIGLGFASADRYGSEYIDPIIIEDGRISMRSNNCGGSLGGITIGMPLNGRVVFKPTSSIHKPCGTVTKTGEPTSYVTQKGSRHDPCVTIRAVGVVEAMVNLVLADLLLQQRCARL.

Arg47 provides a ligand contact to NADP(+). Residues 123 to 125, Gly283, 298 to 302, and Arg326 each bind FMN; these read RSS and KPTSS.

It belongs to the chorismate synthase family. Homotetramer. FMNH2 is required as a cofactor.

It carries out the reaction 5-O-(1-carboxyvinyl)-3-phosphoshikimate = chorismate + phosphate. It functions in the pathway metabolic intermediate biosynthesis; chorismate biosynthesis; chorismate from D-erythrose 4-phosphate and phosphoenolpyruvate: step 7/7. Its function is as follows. Catalyzes the anti-1,4-elimination of the C-3 phosphate and the C-6 proR hydrogen from 5-enolpyruvylshikimate-3-phosphate (EPSP) to yield chorismate, which is the branch point compound that serves as the starting substrate for the three terminal pathways of aromatic amino acid biosynthesis. This reaction introduces a second double bond into the aromatic ring system. This is Chorismate synthase from Chlamydia abortus (strain DSM 27085 / S26/3) (Chlamydophila abortus).